Here is a 620-residue protein sequence, read N- to C-terminus: Chaperone protein DnaK (620 aa).

Phosphothreonine; by autocatalysis is present on threonine 197. The tract at residues 597–620 is disordered; sequence AMANKNNAEQPKKKDDDVIDAEVE.

The protein belongs to the heat shock protein 70 family.

Functionally, acts as a chaperone. The polypeptide is Chaperone protein DnaK (Helicobacter pylori (strain Shi470)).